Reading from the N-terminus, the 340-residue chain is tRNA N6-adenosine threonylcarbamoyltransferase (340 aa).

Fe cation-binding residues include histidine 115 and histidine 119. Residues 137-141, aspartate 170, glycine 183, aspartate 187, and asparagine 276 contribute to the substrate site; that span reads IVSGG. Aspartate 304 contacts Fe cation.

Belongs to the KAE1 / TsaD family. Fe(2+) is required as a cofactor.

Its subcellular location is the cytoplasm. It catalyses the reaction L-threonylcarbamoyladenylate + adenosine(37) in tRNA = N(6)-L-threonylcarbamoyladenosine(37) in tRNA + AMP + H(+). Functionally, required for the formation of a threonylcarbamoyl group on adenosine at position 37 (t(6)A37) in tRNAs that read codons beginning with adenine. Is involved in the transfer of the threonylcarbamoyl moiety of threonylcarbamoyl-AMP (TC-AMP) to the N6 group of A37, together with TsaE and TsaB. TsaD likely plays a direct catalytic role in this reaction. The sequence is that of tRNA N6-adenosine threonylcarbamoyltransferase from Staphylococcus epidermidis (strain ATCC 35984 / DSM 28319 / BCRC 17069 / CCUG 31568 / BM 3577 / RP62A).